Consider the following 977-residue polypeptide: Alanine--tRNA ligase (977 aa).

A disordered region spans residues 512 to 535 (SQVDSKLQSSTPAGTGSYDSKQVS). Residues H618, H622, C720, and H724 each contribute to the Zn(2+) site.

This sequence belongs to the class-II aminoacyl-tRNA synthetase family. Requires Zn(2+) as cofactor.

It is found in the cytoplasm. It carries out the reaction tRNA(Ala) + L-alanine + ATP = L-alanyl-tRNA(Ala) + AMP + diphosphate. Its function is as follows. Catalyzes the attachment of alanine to tRNA(Ala) in a two-step reaction: alanine is first activated by ATP to form Ala-AMP and then transferred to the acceptor end of tRNA(Ala). Also edits incorrectly charged Ser-tRNA(Ala) and Gly-tRNA(Ala) via its editing domain. This Leptospira interrogans serogroup Icterohaemorrhagiae serovar copenhageni (strain Fiocruz L1-130) protein is Alanine--tRNA ligase.